We begin with the raw amino-acid sequence, 240 residues long: Pyridoxine 5'-phosphate synthase (240 aa).

Asn7 is a binding site for 3-amino-2-oxopropyl phosphate. 9-10 (DH) serves as a coordination point for 1-deoxy-D-xylulose 5-phosphate. Arg18 lines the 3-amino-2-oxopropyl phosphate pocket. His43 serves as the catalytic Proton acceptor. Residues Arg45 and His50 each coordinate 1-deoxy-D-xylulose 5-phosphate. Catalysis depends on Glu70, which acts as the Proton acceptor. A 1-deoxy-D-xylulose 5-phosphate-binding site is contributed by Thr100. The active-site Proton donor is His191. 3-amino-2-oxopropyl phosphate contacts are provided by residues Gly192 and 213-214 (GH).

This sequence belongs to the PNP synthase family. Homooctamer; tetramer of dimers.

It localises to the cytoplasm. The catalysed reaction is 3-amino-2-oxopropyl phosphate + 1-deoxy-D-xylulose 5-phosphate = pyridoxine 5'-phosphate + phosphate + 2 H2O + H(+). It functions in the pathway cofactor biosynthesis; pyridoxine 5'-phosphate biosynthesis; pyridoxine 5'-phosphate from D-erythrose 4-phosphate: step 5/5. In terms of biological role, catalyzes the complicated ring closure reaction between the two acyclic compounds 1-deoxy-D-xylulose-5-phosphate (DXP) and 3-amino-2-oxopropyl phosphate (1-amino-acetone-3-phosphate or AAP) to form pyridoxine 5'-phosphate (PNP) and inorganic phosphate. The protein is Pyridoxine 5'-phosphate synthase of Crocosphaera subtropica (strain ATCC 51142 / BH68) (Cyanothece sp. (strain ATCC 51142)).